An 892-amino-acid chain; its full sequence is Transposase for transposon Tn4556 (892 aa).

The span at 1-12 (MGGRAGLDDGRG) shows a compositional bias: basic and acidic residues. Residues 1 to 63 (MGGRAGLDDG…GQPARDAEHR (63 aa)) form a disordered region. A compositionally biased stretch (low complexity) spans 23-34 (VAEGAAGAAAWG).

The protein belongs to the transposase 7 family.

In terms of biological role, required for transposition of transposon Tn4556. This is Transposase for transposon Tn4556 (tnpA) from Streptomyces fradiae (Streptomyces roseoflavus).